The primary structure comprises 124 residues: U13-hexatoxin-Mg1a (124 aa).

A signal peptide spans 1 to 17; sequence MKLSALVFVASVMLVAA. The propeptide occupies 18–52; the sequence is SPVKDVEEPVETHLAADLKTIEELAKYEEAAVQKR. 4 disulfides stabilise this stretch: cysteine 54/cysteine 72, cysteine 65/cysteine 78, cysteine 69/cysteine 116, and cysteine 71/cysteine 87.

Expressed by the venom gland.

The protein resides in the secreted. No toxicity is observed upon intracranial injection into mice and intrathorax injection into crickets. The sequence is that of U13-hexatoxin-Mg1a from Macrothele gigas (Japanese funnel web spider).